A 758-amino-acid polypeptide reads, in one-letter code: CRISPR system single-strand-specific deoxyribonuclease Cas10/Csm1 (subtype III-A) (758 aa).

The segment at M1–G82 is HD domain. Positions K509–S647 constitute a GGDEF domain.

It belongs to the CRISPR-associated Cas10/Csm1 family. In terms of assembly, part of the Csm effector complex that includes at least Cas10(1), Csm2(3), Csm3(5), Csm4(1), Csm5(1) and mature crRNA. The Csm complex is elongated and slightly twisted with a maximal length of 215 Angstroms and a diameter of 75-80 Angstroms. It has been modeled to have a central protein filamant of Csm3 subunits along which the dsRNA helix of paired crRNA and target RNA binds. The filament is capped at one end by Cas10 and Csm4 and at the other end by Csm5; ssDNA is thought to bind to the N-terminal HD domain of Cas10. Csm with a precursor crRNA does not include Csm5, while Cas6, the enzyme probably involved in pre-crRNA processing, is found associated with a subset of the Csm complex. A divalent metal cation serves as cofactor.

It carries out the reaction 6 ATP = cyclic hexaadenylate + 6 diphosphate. SsDNase activity is activated by target RNA binding to the Csm-crRNA complex and is inhibited by EDTA. Its function is as follows. CRISPR (clustered regularly interspaced short palindromic repeat) is an adaptive immune system that provides protection against mobile genetic elements (viruses, transposable elements and conjugative plasmids). CRISPR clusters contain spacers, sequences complementary to antecedent mobile elements, and target invading nucleic acids. CRISPR clusters are transcribed and processed into CRISPR RNA (crRNA). The type III-A Csm effector complex binds crRNA and acts as a crRNA-guided RNase, DNase and cyclic oligoadenylate synthase; binding of target RNA cognate to the crRNA is required for all activities. In a heterologous host this Csm effector complex restricts ssRNA phage MS2, suggesting it may target RNA viruses in vivo. Csm functions as a non-specific ssDNase. Base-pairing between crRNA and target RNA to form a ternary Csm complex activates a ssDNase activity; target RNA cleavage suppresses the ssDNase, a temporal control that prevents uncontrolled DNA degradation. Viral RNA transcripts probably tether the Csm complex to the viral genome, recruiting Cas10 ssDNA activity which is able to degrade DNA in the transcription bubble, spatially controlling the DNase activity. In terms of biological role, this subunit has a weak ssDNase activity that is dramatically activated by the ternary Csm effector complex (the crRNA, Cas proteins and a cognate target ssRNA). Target RNA and ssDNA are cleaved simultaneously, although RNase activity (of Csm3) is much faster. RNA cleavage by Csm3 is not required for ssDNase activity as Csm complex with inactive Csm3 still has ssDNase activity; however as the cleaved target RNA products dissociate away ssDNase activity decreases. Self-recognition, with subsequent repression of the ssDNase activity, occurs when the 5' handle of the crRNA bases pairs with the 3' flanking sequence of the target RNA (which would occur if the CRISPR locus were transcribed as an anti-pre-crRNA). This protein has low activity on dsDNA which is not stimulated by the Csm complex. Functionally, this subunit is a single-strand-specific deoxyribonuclease (ssDNase) which digests both linear and circular ssDNA; it has both exo- and endonuclease activity. Its function is as follows. When associated with the ternary Csm effector complex (the crRNA, Cas proteins and a cognate target ssRNA) synthesizes cyclic oligoadenylates (cOA) from ATP, producing cyclic triadenylate (cA3) up to cyclic hexaadenylate (cA6), which is the active cOA. The enzyme is also able to cyclize pppA3 up to pppA6. cOAs are second messengers that induce an antiviral state important for defense against invading nucleic acids. Synthesis of cOA can occur with AMP plus ATP, 2'dATP or 3'dATP (but no other nucleotides), and requires a free 3'-OH ribose moiety. This chain is CRISPR system single-strand-specific deoxyribonuclease Cas10/Csm1 (subtype III-A), found in Streptococcus thermophilus.